A 242-amino-acid polypeptide reads, in one-letter code: Ribose-5-phosphate isomerase A (242 aa).

Residues 39-42 (SGST), 95-98 (DGAD), and 108-111 (KGGG) each bind substrate. Glu117 (proton acceptor) is an active-site residue. A substrate-binding site is contributed by Lys135.

It belongs to the ribose 5-phosphate isomerase family. Homodimer.

It carries out the reaction aldehydo-D-ribose 5-phosphate = D-ribulose 5-phosphate. It participates in carbohydrate degradation; pentose phosphate pathway; D-ribose 5-phosphate from D-ribulose 5-phosphate (non-oxidative stage): step 1/1. Catalyzes the reversible conversion of ribose-5-phosphate to ribulose 5-phosphate. This is Ribose-5-phosphate isomerase A from Chlamydia trachomatis serovar L2 (strain ATCC VR-902B / DSM 19102 / 434/Bu).